The sequence spans 938 residues: Translation initiation factor IF-2 (938 aa).

The interval 55-322 is disordered; it reads KAEASAAPAA…RKSKRARRQE (268 aa). 2 stretches are compositionally biased toward low complexity: residues 57–68 and 77–117; these read EASAAPAAPAEK and KKAA…AAAP. Over residues 118–136 the composition is skewed to pro residues; sequence KPGPKPAPVAEQPAPPAEP. Low complexity-rich tracts occupy residues 141–153, 180–198, and 224–233; these read APEAPAASAAPAA, GMGRRPAPGAPAAPGAGDN, and MMPKSPSAFG. Residues 247 to 293 show a composition bias toward gly residues; it reads PGRGGAPGRGGAPGRGGVGTGAPGRGGAPGGGFGPSGGGRPGGGRPG. The span at 310 to 319 shows a compositional bias: basic residues; it reads RRGRKSKRAR. In terms of domain architecture, tr-type G spans 431-603; that stretch reads ARPPVVTVMG…VVLTADASLD (173 aa). The G1 stretch occupies residues 440 to 447; it reads GHVDHGKT. 440–447 serves as a coordination point for GTP; that stretch reads GHVDHGKT. Residues 465–469 form a G2 region; sequence GITQH. The interval 490–493 is G3; the sequence is DTPG. Residues 490–494 and 544–547 contribute to the GTP site; these read DTPGH and NKID. The interval 544-547 is G4; sequence NKID. A G5 region spans residues 580-582; sequence SAK.

The protein belongs to the TRAFAC class translation factor GTPase superfamily. Classic translation factor GTPase family. IF-2 subfamily.

Its subcellular location is the cytoplasm. Its function is as follows. One of the essential components for the initiation of protein synthesis. Protects formylmethionyl-tRNA from spontaneous hydrolysis and promotes its binding to the 30S ribosomal subunits. Also involved in the hydrolysis of GTP during the formation of the 70S ribosomal complex. This is Translation initiation factor IF-2 from Nocardioides sp. (strain ATCC BAA-499 / JS614).